The sequence spans 105 residues: Met repressor (105 aa).

This sequence belongs to the MetJ family. In terms of assembly, homodimer.

It is found in the cytoplasm. Its function is as follows. This regulatory protein, when combined with SAM (S-adenosylmethionine) represses the expression of the methionine regulon and of enzymes involved in SAM synthesis. The polypeptide is Met repressor (Serratia proteamaculans (strain 568)).